The following is an 824-amino-acid chain: MMNFFTSKSSNQDTGFSSQHQHPNGQNNGNNNSSTAGNDNGYPCKLVSSGPCASSNNGALFTNFTLQTATPTTAISQDLYAMGTTGITSENALFQMKSMNNGISSVNNNNSNTPTIITTSQEETNAGNVHGDTGGNSLQNSEDDNFSSSSTTKCLLSSTSSLSINQREAAAAAYGPDTDIPRGKLEVTIIEARDLVTRSKDSQPYVVCTFESSEFISNGPESLGAINNNNNNNNNNQHNQNQHINNNNENTNPDAASQHHNNNSGWNGSQLPSIKEHLKKKPLYTHRSSSQLDQLNSCSSVTDPSKRSSNSSSGSSNGPKNDSSHPIWHHKTTFDVLGSHSELDISVYDAAHDHMFLGQVRLYPMIHNLAHASQHQWHSLKPRVIDEVVSGDILIKWTYKQTKKRHYGPQDFEVLRLLGKGTFGQVYQVKKKDTQRIYAMKVLSKKVIVKKNEIAHTIGERNILVTTASKSSPFIVGLKFSFQTPTDLYLVTDYMSGGELFWHLQKEGRFSEDRAKFYIAELVLALEHLHDNDIVYRDLKPENILLDANGNIALCDFGLSKADLKDRTNTFCGTTEYLAPELLLDETGYTKMVDFWSLGVLIFEMCCGWSPFFAENNQKMYQKIAFGKVKFPRDVLSQEGRSFVKGLLNRNPKHRLGAIDDGRELRAHPFFADIDWEALKQKKIPPPFKPHLVSETDTSNFDPEFTTASTSYMNKHQPMMTATPLSPAMQAKFAGFTFVDESAIDEHVNNNRKFLQNSYFMEPGSFIPGNPNLPPDEDVIDDDGDEDINDGFNQEKNMNNSHSQMDFDGDQHMDDEFVSGRFEI.

A compositionally biased stretch (polar residues) spans 1 to 23 (MMNFFTSKSSNQDTGFSSQHQHP). Disordered regions lie at residues 1–37 (MMNFFTSKSSNQDTGFSSQHQHPNGQNNGNNNSSTAG), 125–152 (NAGNVHGDTGGNSLQNSEDDNFSSSSTT), 221–272 (ESLG…SQLP), and 285–327 (THRS…SHPI). Low complexity predominate over residues 24 to 37 (NGQNNGNNNSSTAG). The C2 domain maps to 166-378 (QREAAAAAYG…LAHASQHQWH (213 aa)). Low complexity predominate over residues 226–248 (INNNNNNNNNNQHNQNQHINNNN). Composition is skewed to polar residues over residues 249-272 (ENTNPDAASQHHNNNSGWNGSQLP) and 286-302 (HRSSSQLDQLNSCSSVT). Over residues 307–321 (RSSNSSSGSSNGPKN) the composition is skewed to low complexity. The Protein kinase domain occupies 412–671 (FEVLRLLGKG…GRELRAHPFF (260 aa)). Residues 418–426 (LGKGTFGQV) and Lys441 each bind ATP. The active-site Proton acceptor is Asp538. Thr570 is subject to Phosphothreonine; by PKH1 or PKH2. The region spanning 672 to 748 (ADIDWEALKQ…VDESAIDEHV (77 aa)) is the AGC-kinase C-terminal domain. Ser711 carries the post-translational modification Phosphoserine; by TORC1. Thr723 is subject to Phosphothreonine; by TORC1. Ser726 carries the phosphoserine; by TORC1 modification. The residue at position 737 (Thr737) is a Phosphothreonine; by TORC1. 2 positions are modified to phosphoserine; by TORC1: Ser758 and Ser765.

This sequence belongs to the protein kinase superfamily. AGC Ser/Thr protein kinase family. cAMP subfamily. Post-translationally, phosphorylated by TORC1 in nutrient-replete conditions and during mechanical stress.

The catalysed reaction is L-seryl-[protein] + ATP = O-phospho-L-seryl-[protein] + ADP + H(+). It catalyses the reaction L-threonyl-[protein] + ATP = O-phospho-L-threonyl-[protein] + ADP + H(+). With respect to regulation, activated by cAMP. In terms of biological role, protein kinase that is part of growth control pathway which is at least partially redundant with the cAMP pathway. Regulates both BCY1 phosphorylation and MPK1 activity. Regulates ribosome biogenesis, translation initiation, and entry into stationary phase in a TORC1-dependent manner. The protein is Serine/threonine-protein kinase SCH9 (SCH9) of Saccharomyces cerevisiae (strain ATCC 204508 / S288c) (Baker's yeast).